Reading from the N-terminus, the 843-residue chain is Pullulanase (843 aa).

The first 19 residues, 1–19 (MKTKLWLLLVLLLSALIFS), serve as a signal peptide directing secretion. The Nucleophile role is filled by D535. The Proton donor role is filled by E564.

It belongs to the glycosyl hydrolase 13 family.

It carries out the reaction Hydrolysis of (1-&gt;6)-alpha-D-glucosidic linkages in pullulan, amylopectin and glycogen, and in the alpha- and beta-limit dextrins of amylopectin and glycogen.. This chain is Pullulanase (pulA), found in Thermotoga maritima (strain ATCC 43589 / DSM 3109 / JCM 10099 / NBRC 100826 / MSB8).